Consider the following 491-residue polypeptide: MALQFQLNQTTPQTVTTDCVIVGIYADKTLSPTAKTLDAASGGRITALTARGDLTGKSGTSALLHDLNGVTAPRVLVVGLGEADKFGAGQYIKAVGDAVRALKDAPVTHALLTLSELPVKDRNAAWNIHQAVIAADHAAYRYTATLGTSRKKAEESGLITLAIHGQETSGLTLGQAIAEGVEYARALGNLPPNICTPAYLAETTAHFAATHPGATCEILDESNMEALGMGALLAVARGSANRPHLIVLKWNGGGDARPYVLVGKGITFDTGGVNLKTQGGIEEMKYDMCGGAAVIGTFVAAVKVRLPLNLIVIVPAVENAIDGNAYRPSDVITSMSGKTIEVGNTDAEGRLILCDALTYAERFKPEALIDVATLTGACMIALGRAATGLMTHHDDLANELLTAGEHVHDRAWRLPLWDEYQNLLDSTFADVYNIGGRWGGAITAGCFLSRFTEGQRWAHLDIAGSASNEGKRGMATGRPVGLLTQWLVDRC.

The Mn(2+) site is built by Lys-264 and Asp-269. The active site involves Lys-276. Positions 287, 346, and 348 each coordinate Mn(2+). Arg-350 is an active-site residue.

Belongs to the peptidase M17 family. It depends on Mn(2+) as a cofactor.

The protein localises to the cytoplasm. It catalyses the reaction Release of an N-terminal amino acid, Xaa-|-Yaa-, in which Xaa is preferably Leu, but may be other amino acids including Pro although not Arg or Lys, and Yaa may be Pro. Amino acid amides and methyl esters are also readily hydrolyzed, but rates on arylamides are exceedingly low.. It carries out the reaction Release of an N-terminal amino acid, preferentially leucine, but not glutamic or aspartic acids.. Its function is as follows. Presumably involved in the processing and regular turnover of intracellular proteins. Catalyzes the removal of unsubstituted N-terminal amino acids from various peptides. This is Probable cytosol aminopeptidase from Xylella fastidiosa (strain M12).